Here is a 262-residue protein sequence, read N- to C-terminus: Protein NEGATIVE GRAVITROPIC RESPONSE OF ROOTS (262 aa).

Residues 1 to 40 (MKFFNWMQNKLGGKQENRKSNTSTSTTYAKPEPREEFSDW) are disordered. Residues 43 to 49 (SLLAIGT) carry the IGT motif motif.

The protein belongs to the LAZY family.

Its function is as follows. Involved in the control of root gravitropism. The polypeptide is Protein NEGATIVE GRAVITROPIC RESPONSE OF ROOTS (Medicago truncatula (Barrel medic)).